Here is a 208-residue protein sequence, read N- to C-terminus: Outer-membrane lipoprotein carrier protein (208 aa).

The first 22 residues, 1 to 22 (MRKTLTALMLSLPLLTPHMAFA), serve as a signal peptide directing secretion.

Belongs to the LolA family. Monomer.

The protein resides in the periplasm. In terms of biological role, participates in the translocation of lipoproteins from the inner membrane to the outer membrane. Only forms a complex with a lipoprotein if the residue after the N-terminal Cys is not an aspartate (The Asp acts as a targeting signal to indicate that the lipoprotein should stay in the inner membrane). This chain is Outer-membrane lipoprotein carrier protein, found in Shewanella woodyi (strain ATCC 51908 / MS32).